Consider the following 378-residue polypeptide: Dihydroorotate dehydrogenase (quinone) (378 aa).

Residues 77 to 81 (AGFDK) and Thr101 contribute to the FMN site. Lys81 serves as a coordination point for substrate. 126-130 (NRMGF) contacts substrate. Residues Asn158 and Asn191 each coordinate FMN. Asn191 lines the substrate pocket. The active-site Nucleophile is Ser194. Asn196 lines the substrate pocket. 2 residues coordinate FMN: Lys229 and Thr257. 258 to 259 (NT) is a substrate binding site. Residues Gly287, Gly316, and 337–338 (YT) each bind FMN.

The protein belongs to the dihydroorotate dehydrogenase family. Type 2 subfamily. As to quaternary structure, monomer. FMN serves as cofactor.

It is found in the cell membrane. It carries out the reaction (S)-dihydroorotate + a quinone = orotate + a quinol. The protein operates within pyrimidine metabolism; UMP biosynthesis via de novo pathway; orotate from (S)-dihydroorotate (quinone route): step 1/1. Functionally, catalyzes the conversion of dihydroorotate to orotate with quinone as electron acceptor. This chain is Dihydroorotate dehydrogenase (quinone), found in Synechococcus elongatus (strain ATCC 33912 / PCC 7942 / FACHB-805) (Anacystis nidulans R2).